The following is a 286-amino-acid chain: MELILSTSPAELTLDPACQPKLPLDSTCQPEMTFNPGPTELTLDPEHQPEETPAPSLAELTLEPVHRRPELLDACADLINDQWPRSRTSRLHSLGQSSDAFPLCLMLLSPHPTLEAAPVVVGHARLSRVLNQPQSLLVETVVVARALRGRGFGRRLMEGLEVFARARGFRKLHLTTHDQVHFYTHLGYQLGEPVQGLVFTSRRLPATLLNAFPTAPSPRPPRKAPNLTAQAAPRGPKGPPLPPPPPLPECLTISPPVPSGPPSKSLLETQYQNVRGRPIFWMEKDI.

A disordered region spans residues threonine 33–alanine 54. The N-acetyltransferase domain occupies leucine 60–threonine 207. Residues arginine 85 and arginine 90 to serine 93 contribute to the substrate site. Acetyl-CoA is bound by residues valine 141–valine 143, glycine 149–arginine 154, and glutamine 179. Residues phenylalanine 212 to threonine 269 are disordered. A compositionally biased stretch (pro residues) spans proline 236–proline 248.

This sequence belongs to the acetyltransferase family. As to expression, strongly expressed in heart and skeletal muscle, followed by brain and pancreas, with weak expression in kidney, liver, and lung and no expression in placenta.

The protein resides in the cytoplasm. The protein localises to the cytosol. The enzyme catalyses N-terminal L-aspartyl-L-aspartyl-L-aspartyl-[protein] + acetyl-CoA = N-terminal N-acetyl-L-aspartyl-L-aspartyl-L-aspartyl-[protein] + CoA + H(+). It carries out the reaction N-terminal L-glutamyl-L-glutamyl-L-glutamyl-[protein] + acetyl-CoA = N-terminal N-acetyl-L-glutamyl-L-glutamyl-L-glutamyl-[protein] + CoA + H(+). In terms of biological role, N-alpha-acetyltransferase that specifically mediates the acetylation of the acidic amino terminus of processed forms of beta- and gamma-actin (ACTB and ACTG, respectively). N-terminal acetylation of processed beta- and gamma-actin regulates actin filament depolymerization and elongation. In vivo, preferentially displays N-terminal acetyltransferase activity towards acid N-terminal sequences starting with Asp-Asp-Asp and Glu-Glu-Glu. In vitro, shows high activity towards Met-Asp-Glu-Leu and Met-Asp-Asp-Asp. May act as a tumor suppressor. The chain is N-alpha-acetyltransferase 80 from Homo sapiens (Human).